Here is a 170-residue protein sequence, read N- to C-terminus: MPTKSIKIMVEGGNVKPGPPLAPTLSQLGLNVGEVVKKLNEATSSFKGMSVPVTIEVDSNTKKYEIKVGIPTTTALLLKEAGVSEPSGDPAHKKIGNLSLEQVIKIAIMKKPGLTTKSLKAAVKSMLGTAKSIGVTVENKDPKELVKEVEEGKYDDLLAKYENEWNEVKE.

This sequence belongs to the universal ribosomal protein uL11 family. As to quaternary structure, part of the ribosomal stalk of the 50S ribosomal subunit. Interacts with L10 and the large rRNA to form the base of the stalk. L10 forms an elongated spine to which L12 dimers bind in a sequential fashion forming a multimeric L10(L12)X complex.

Forms part of the ribosomal stalk which helps the ribosome interact with GTP-bound translation factors. This Saccharolobus islandicus (strain M.14.25 / Kamchatka #1) (Sulfolobus islandicus) protein is Large ribosomal subunit protein uL11.